The sequence spans 802 residues: Copper-exporting P-type ATPase (802 aa).

2 HMA domains span residues 5 to 71 (KEIA…YHVV) and 73 to 139 (EKAE…YKLK). Residues C16, C19, C84, and C87 each contribute to the Cu(+) site. Transmembrane regions (helical) follow at residues 162 to 181 (LIFS…SHFT), 196 to 218 (WMQF…VGAY), 230 to 249 (VLVA…LTFQ), 259 to 278 (GLYY…GKLF), 412 to 434 (ISGI…WYLW), and 447 to 469 (FIAV…SIMA). D499 serves as the catalytic 4-aspartylphosphate intermediate. Positions 698 and 702 each coordinate Mg(2+). Helical transmembrane passes span 756–775 (LFWA…LGFL) and 779–796 (IAGA…LNAL).

The protein belongs to the cation transport ATPase (P-type) (TC 3.A.3) family. Type IB subfamily. In terms of assembly, monomer at sub-stoichiometric copper concentrations. Homodimer at higher copper concentrations. Forms a heterodimer (electrostatic interactions) with CopZ during the transfer of Cu(+).

Its subcellular location is the cell membrane. It carries out the reaction Cu(+)(in) + ATP + H2O = Cu(+)(out) + ADP + phosphate + H(+). In terms of biological role, involved in copper export. This Bacillus subtilis (strain 168) protein is Copper-exporting P-type ATPase (copA).